We begin with the raw amino-acid sequence, 380 residues long: Cytochrome b (380 aa).

The next 4 membrane-spanning stretches (helical) occupy residues serine 33 to methionine 53, tryptophan 77 to valine 98, tryptophan 113 to leucine 133, and phenylalanine 178 to leucine 198. Histidine 83 and histidine 97 together coordinate heme b. Heme b-binding residues include histidine 182 and histidine 196. Histidine 201 contacts a ubiquinone. Transmembrane regions (helical) follow at residues tyrosine 226 to serine 246, leucine 288 to histidine 308, leucine 320 to glycine 340, and phenylalanine 347 to proline 367.

This sequence belongs to the cytochrome b family. The cytochrome bc1 complex contains 3 respiratory subunits (MT-CYB, CYC1 and UQCRFS1), 2 core proteins (UQCRC1 and UQCRC2) and probably 6 low-molecular weight proteins. Requires heme b as cofactor.

It is found in the mitochondrion inner membrane. Its function is as follows. Component of the ubiquinol-cytochrome c reductase complex (complex III or cytochrome b-c1 complex) that is part of the mitochondrial respiratory chain. The b-c1 complex mediates electron transfer from ubiquinol to cytochrome c. Contributes to the generation of a proton gradient across the mitochondrial membrane that is then used for ATP synthesis. This chain is Cytochrome b (mt-cyb), found in Polyodon spathula (North American paddlefish).